The following is a 426-amino-acid chain: Enolase (426 aa).

Residue Gln-162 coordinates (2R)-2-phosphoglycerate. Glu-204 serves as the catalytic Proton donor. Residues Asp-241, Glu-286, and Asp-313 each coordinate Mg(2+). (2R)-2-phosphoglycerate contacts are provided by Lys-338, Arg-367, Ser-368, and Lys-389. Lys-338 acts as the Proton acceptor in catalysis.

Belongs to the enolase family. The cofactor is Mg(2+).

Its subcellular location is the cytoplasm. It is found in the secreted. The protein resides in the cell surface. The catalysed reaction is (2R)-2-phosphoglycerate = phosphoenolpyruvate + H2O. It functions in the pathway carbohydrate degradation; glycolysis; pyruvate from D-glyceraldehyde 3-phosphate: step 4/5. In terms of biological role, catalyzes the reversible conversion of 2-phosphoglycerate (2-PG) into phosphoenolpyruvate (PEP). It is essential for the degradation of carbohydrates via glycolysis. The sequence is that of Enolase from Aliarcobacter butzleri (strain RM4018) (Arcobacter butzleri).